The chain runs to 188 residues: Peroxynitrite isomerase (188 aa).

Positions 35-41 (GTWRGEG) match the GXWXGXG motif. His-178 contacts heme b.

Belongs to the nitrobindin family. As to quaternary structure, homodimer. It depends on heme b as a cofactor.

It catalyses the reaction peroxynitrite = nitrate. Its pathway is nitrogen metabolism. Functionally, heme-binding protein able to scavenge peroxynitrite and to protect free L-tyrosine against peroxynitrite-mediated nitration, by acting as a peroxynitrite isomerase that converts peroxynitrite to nitrate. Therefore, this protein likely plays a role in peroxynitrite sensing and in the detoxification of reactive nitrogen and oxygen species (RNS and ROS, respectively). Is able to bind nitric oxide (NO) in vitro, but may act as a sensor of peroxynitrite levels in vivo. This is Peroxynitrite isomerase from Frankia casuarinae (strain DSM 45818 / CECT 9043 / HFP020203 / CcI3).